The primary structure comprises 479 residues: Ribulose bisphosphate carboxylase large chain (479 aa).

Positions methionine 1–serine 2 are excised as a propeptide. An N-acetylproline modification is found at proline 3. Positions 123 and 173 each coordinate substrate. Catalysis depends on lysine 175, which acts as the Proton acceptor. Lysine 177 contributes to the substrate binding site. Residues lysine 201, aspartate 203, and glutamate 204 each contribute to the Mg(2+) site. N6-carboxylysine is present on lysine 201. The active-site Proton acceptor is histidine 294. Substrate contacts are provided by arginine 295, histidine 327, and serine 379.

Belongs to the RuBisCO large chain family. Type I subfamily. Heterohexadecamer of 8 large chains and 8 small chains; disulfide-linked. The disulfide link is formed within the large subunit homodimers. It depends on Mg(2+) as a cofactor. In terms of processing, the disulfide bond which can form in the large chain dimeric partners within the hexadecamer appears to be associated with oxidative stress and protein turnover.

Its subcellular location is the plastid. It localises to the chloroplast. It catalyses the reaction 2 (2R)-3-phosphoglycerate + 2 H(+) = D-ribulose 1,5-bisphosphate + CO2 + H2O. It carries out the reaction D-ribulose 1,5-bisphosphate + O2 = 2-phosphoglycolate + (2R)-3-phosphoglycerate + 2 H(+). Its function is as follows. RuBisCO catalyzes two reactions: the carboxylation of D-ribulose 1,5-bisphosphate, the primary event in carbon dioxide fixation, as well as the oxidative fragmentation of the pentose substrate in the photorespiration process. Both reactions occur simultaneously and in competition at the same active site. This is Ribulose bisphosphate carboxylase large chain from Hordeum vulgare (Barley).